The primary structure comprises 705 residues: Double-strand break repair protein MRE11 (705 aa).

Mn(2+) contacts are provided by Asp-15, His-17, Asp-55, and Asn-122. His-123 functions as the Proton donor in the catalytic mechanism. Residues His-220, His-248, and His-250 each coordinate Mn(2+). The span at 505 to 514 (RSLRSKEDSR) shows a compositional bias: basic and acidic residues. Residues 505–705 (RSLRSKEDSR…TRNYGAVRRR (201 aa)) form a disordered region. Polar residues-rich tracts occupy residues 515 to 538 (FTSS…LNSF) and 589 to 605 (SMKQ…SSAA). Residues 641 to 663 (GRKRAAPRGGRGRGRGATAKRGR) are compositionally biased toward basic residues.

This sequence belongs to the MRE11/RAD32 family. Component of the MRN complex composed of two heterodimers RAD50/MRE11 associated with a single NBS1. Requires Mn(2+) as cofactor.

The protein resides in the nucleus. It localises to the chromosome. In terms of biological role, core component of the MRN complex, which plays a central role in double-strand break (DSB) repair, DNA recombination, maintenance of telomere integrity and meiosis. The MRN complex is involved in the repair of DNA double-strand breaks (DSBs) via homologous recombination (HR), an error-free mechanism which primarily occurs during S and G2 phases. The complex (1) mediates the end resection of damaged DNA, which generates proper single-stranded DNA, a key initial steps in HR, and is (2) required for the recruitment of other repair factors and efficient activation of ATM and ATR upon DNA damage. Within the MRN complex, MRE11 possesses both single-strand endonuclease activity and double-strand-specific 3'-5' exonuclease activity. MRE11 first endonucleolytically cleaves the 5' strand at DNA DSB ends to prevent non-homologous end joining (NHEJ) and licence HR. It then generates a single-stranded DNA gap via 3' to 5' exonucleolytic degradation, which is required for single-strand invasion and recombination. This chain is Double-strand break repair protein MRE11, found in Oryza sativa subsp. indica (Rice).